Consider the following 561-residue polypeptide: Sperm-tail PG-rich repeat-containing protein 2 (561 aa).

3 STPGR repeats span residues 21-34, 63-72, and 97-104; these read VGPG…PKQQ, PGPAHYNVSQ, and GPGPGSYN. The segment at 123–143 is disordered; sequence PAVSRNIDIPSIPSSGKSHGY. STPGR repeat units follow at residues 164–191, 200–210, 250–285, 292–299, 334–367, 421–438, and 471–481; these read GPAY…NATG, GPGPGQYDIIQ, PGPG…TERF, TPAPGTYN, LPGP…FGSS, LPAP…MSQV, and GPGPATYSPVL.

The sequence is that of Sperm-tail PG-rich repeat-containing protein 2 (Stpg2) from Mus musculus (Mouse).